The primary structure comprises 235 residues: Large ribosomal subunit protein uL1 (235 aa).

Belongs to the universal ribosomal protein uL1 family. In terms of assembly, part of the 50S ribosomal subunit.

Its function is as follows. Binds directly to 23S rRNA. The L1 stalk is quite mobile in the ribosome, and is involved in E site tRNA release. Functionally, protein L1 is also a translational repressor protein, it controls the translation of the L11 operon by binding to its mRNA. The protein is Large ribosomal subunit protein uL1 of Paenarthrobacter aurescens (strain TC1).